The sequence spans 563 residues: Arginine--tRNA ligase (563 aa).

The short motif at 121-131 (PNIAKPFSIGH) is the 'HIGH' region element.

This sequence belongs to the class-I aminoacyl-tRNA synthetase family. In terms of assembly, monomer.

It localises to the cytoplasm. It catalyses the reaction tRNA(Arg) + L-arginine + ATP = L-arginyl-tRNA(Arg) + AMP + diphosphate. The chain is Arginine--tRNA ligase from Streptococcus pyogenes serotype M6 (strain ATCC BAA-946 / MGAS10394).